The primary structure comprises 106 residues: Protein Rev (106 aa).

Residues 8–16 (VIKFLYQSN) form a homomultimerization region. Residues 13-36 (YQSNPPPRPEGTRQARRNRRRRWR) form a disordered region. Residues 24 to 40 (TRQARRNRRRRWRARQR) carry the Nuclear localization signal and RNA-binding (RRE) motif. Residues 26–36 (QARRNRRRRWR) are compositionally biased toward basic residues. Positions 63 to 74 (LQLPPLERLTLD) match the Nuclear export signal and binding to XPO1 motif. Ser-82 and Ser-89 each carry phosphoserine; by host.

The protein belongs to the HIV-1 REV protein family. As to quaternary structure, homomultimer; when bound to the RRE. Multimeric assembly is essential for activity and may involve XPO1. Binds to human KPNB1, XPO1, TNPO1, RANBP5 and IPO7. Interacts with the viral Integrase. Interacts with human KHDRBS1. Interacts with human NAP1; this interaction decreases Rev multimerization and stimulates its activity. Interacts with human DEAD-box helicases DDX3 and DDX24; these interactions may serve for viral RNA export to the cytoplasm and packaging, respectively. Interacts with human PSIP1; this interaction may inhibit HIV-1 DNA integration by promoting dissociation of the Integrase-LEDGF/p75 complex. Asymmetrically arginine dimethylated at one site by host PRMT6. Methylation impairs the RNA-binding activity and export of viral RNA from the nucleus to the cytoplasm. In terms of processing, phosphorylated by protein kinase CK2. Presence of, and maybe binding to the N-terminus of the regulatory beta subunit of CK2 is necessary for CK2-mediated Rev's phosphorylation.

The protein localises to the host nucleus. It localises to the host nucleolus. The protein resides in the host cytoplasm. Its function is as follows. Escorts unspliced or incompletely spliced viral pre-mRNAs (late transcripts) out of the nucleus of infected cells. These pre-mRNAs carry a recognition sequence called Rev responsive element (RRE) located in the env gene, that is not present in fully spliced viral mRNAs (early transcripts). This function is essential since most viral proteins are translated from unspliced or partially spliced pre-mRNAs which cannot exit the nucleus by the pathway used by fully processed cellular mRNAs. Rev itself is translated from a fully spliced mRNA that readily exits the nucleus. Rev's nuclear localization signal (NLS) binds directly to KPNB1/Importin beta-1 without previous binding to KPNA1/Importin alpha-1. KPNB1 binds to the GDP bound form of RAN (Ran-GDP) and targets Rev to the nucleus. In the nucleus, the conversion from Ran-GDP to Ran-GTP dissociates Rev from KPNB1 and allows Rev's binding to the RRE in viral pre-mRNAs. Rev multimerization on the RRE via cooperative assembly exposes its nuclear export signal (NES) to the surface. Rev can then form a complex with XPO1/CRM1 and Ran-GTP, leading to nuclear export of the complex. Conversion from Ran-GTP to Ran-GDP mediates dissociation of the Rev/RRE/XPO1/RAN complex, so that Rev can return to the nucleus for a subsequent round of export. Beside KPNB1, also seems to interact with TNPO1/Transportin-1, RANBP5/IPO5 and IPO7/RANBP7 for nuclear import. The nucleoporin-like HRB/RIP is an essential cofactor that probably indirectly interacts with Rev to release HIV RNAs from the perinuclear region to the cytoplasm. The chain is Protein Rev from Homo sapiens (Human).